Reading from the N-terminus, the 701-residue chain is Elongation factor G (701 aa).

The tr-type G domain maps to 8–286 (ERIRNIGIIA…AVVYYLPSPV (279 aa)). GTP contacts are provided by residues 17-24 (AHIDAGKT), 85-89 (DTPGH), and 139-142 (NKMD).

Belongs to the TRAFAC class translation factor GTPase superfamily. Classic translation factor GTPase family. EF-G/EF-2 subfamily.

Its subcellular location is the cytoplasm. In terms of biological role, catalyzes the GTP-dependent ribosomal translocation step during translation elongation. During this step, the ribosome changes from the pre-translocational (PRE) to the post-translocational (POST) state as the newly formed A-site-bound peptidyl-tRNA and P-site-bound deacylated tRNA move to the P and E sites, respectively. Catalyzes the coordinated movement of the two tRNA molecules, the mRNA and conformational changes in the ribosome. This is Elongation factor G from Roseiflexus castenholzii (strain DSM 13941 / HLO8).